We begin with the raw amino-acid sequence, 335 residues long: Beta-ketoacyl-[acyl-carrier-protein] synthase III (335 aa).

Active-site residues include C119 and H261. Positions 262-266 are ACP-binding; that stretch reads QANQR. N291 is a catalytic residue.

This sequence belongs to the thiolase-like superfamily. FabH family. Homodimer.

It is found in the cytoplasm. It catalyses the reaction malonyl-[ACP] + acetyl-CoA + H(+) = 3-oxobutanoyl-[ACP] + CO2 + CoA. The protein operates within lipid metabolism; fatty acid biosynthesis. Functionally, catalyzes the condensation reaction of fatty acid synthesis by the addition to an acyl acceptor of two carbons from malonyl-ACP. Catalyzes the first condensation reaction which initiates fatty acid synthesis and may therefore play a role in governing the total rate of fatty acid production. Possesses both acetoacetyl-ACP synthase and acetyl transacylase activities. Its substrate specificity determines the biosynthesis of branched-chain and/or straight-chain of fatty acids. This chain is Beta-ketoacyl-[acyl-carrier-protein] synthase III, found in Prochlorococcus marinus subsp. pastoris (strain CCMP1986 / NIES-2087 / MED4).